The chain runs to 259 residues: uncharacterized protein (259 aa).

The ABC transporter domain maps to 4–248; that stretch reads LQTTNLSKTY…SILDTLSVLG (245 aa). Residue 42-49 coordinates ATP; that stretch reads GPSGSGKT.

It belongs to the ABC transporter superfamily.

This is an uncharacterized protein from Bacillus subtilis (strain 168).